The primary structure comprises 245 residues: tRNA pseudouridine synthase A 2 (245 aa).

Residue Asp-53 is the Nucleophile of the active site. Tyr-111 lines the substrate pocket.

The protein belongs to the tRNA pseudouridine synthase TruA family. In terms of assembly, homodimer.

It carries out the reaction uridine(38/39/40) in tRNA = pseudouridine(38/39/40) in tRNA. In terms of biological role, formation of pseudouridine at positions 38, 39 and 40 in the anticodon stem and loop of transfer RNAs. The sequence is that of tRNA pseudouridine synthase A 2 from Bacillus thuringiensis subsp. konkukian (strain 97-27).